A 278-amino-acid chain; its full sequence is Potassium/proton antiporter CemA (278 aa).

The next 4 membrane-spanning stretches (helical) occupy residues 60 to 80 (YLVL…SLVF), 163 to 183 (ILAF…IAVL), 201 to 221 (FLII…GWEV), and 239 to 259 (IFLF…YWIF).

Belongs to the CemA family.

It is found in the plastid. It localises to the chloroplast inner membrane. It carries out the reaction K(+)(in) + H(+)(out) = K(+)(out) + H(+)(in). Functionally, contributes to K(+)/H(+) antiport activity by supporting proton efflux to control proton extrusion and homeostasis in chloroplasts in a light-dependent manner to modulate photosynthesis. Prevents excessive induction of non-photochemical quenching (NPQ) under continuous-light conditions. Indirectly promotes efficient inorganic carbon uptake into chloroplasts. This is Potassium/proton antiporter CemA from Guillardia theta (Cryptophyte).